The chain runs to 322 residues: MNNKKTGVLLVNLGTPTAPTAAAVKQFLSEFLHDKRVVDMNRFIWCPLLHGVILPIRAPKVAKLYESVWMEDGSPLLVYSQRQVKALEARLSMPVALGMTYGEPRIKSGIESLEQQGCDEIIILPLYPQYSRTTTAAVFDQIAKQYKTTPVLPNFTMIHNYHDHPLYIKALANSVRQSWERNGKGDYVLCSYHGIPQRFVDNGDIYATHCERTTELLAQELGLTSEQIGMSYQSRFGREEWLQPYTSETLKVLAPKGIKSLDIISPAFSSDCLETLEELSEECKEIFMESGGQKYTFIPCLNDDELHIEMMADIVSSKIFNK.

His-193 and Glu-274 together coordinate Fe cation.

It belongs to the ferrochelatase family.

The protein resides in the cytoplasm. The enzyme catalyses heme b + 2 H(+) = protoporphyrin IX + Fe(2+). It participates in porphyrin-containing compound metabolism; protoheme biosynthesis; protoheme from protoporphyrin-IX: step 1/1. Catalyzes the ferrous insertion into protoporphyrin IX. The polypeptide is Ferrochelatase (Aliivibrio fischeri (strain MJ11) (Vibrio fischeri)).